Reading from the N-terminus, the 423-residue chain is Glucoside xylosyltransferase 2 (423 aa).

Residues Met1 to Lys6 lie on the Cytoplasmic side of the membrane. Residues Phe7–Gly26 form a helical; Signal-anchor for type II membrane protein membrane-spanning segment. The Lumenal portion of the chain corresponds to Asn27–Val423. The disordered stretch occupies residues Arg60 to Pro85. N-linked (GlcNAc...) asparagine glycans are attached at residues Asn215 and Asn256.

The protein belongs to the glycosyltransferase 8 family.

It is found in the membrane. The catalysed reaction is 3-O-(beta-D-glucosyl)-L-seryl-[EGF-like domain protein] + UDP-alpha-D-xylose = 3-O-[alpha-D-xylosyl-(1-&gt;3)-beta-D-glucosyl]-L-seryl-[EGF-like domain protein] + UDP + H(+). Glycosyltransferase which elongates the O-linked glucose attached to EGF-like repeats in the extracellular domain of Notch proteins by catalyzing the addition of xylose. The polypeptide is Glucoside xylosyltransferase 2 (gxylt2) (Xenopus laevis (African clawed frog)).